Reading from the N-terminus, the 295-residue chain is MSWLSKLMPSGIRTENTPAKKRSVPEGLWEKCSNCGSALYGPELEENLEVCPKCDHHMAIRARARLAALFDLDSPTTEIAAQLGPVDVLKFKDQKKYGERIKASQKSSGEYDALIAMRGMLKGNPLVAAAFDFAFMGGSMGSVVGERFARAAEVALEVGCPFVCFSASGGARMQEGLFSLMQMAKTSAALGRLREAGLPYISVLTHPTTGGVSASFAMLGDINIAEPHALIGFAGPRVIEQTVRETLPEGFQRSEFLLDHGAIDQICDRRDMRDRIAELTTMMMRQPHPQDADAA.

A disordered region spans residues 1–20; the sequence is MSWLSKLMPSGIRTENTPAK. Residues 28 to 295 enclose the CoA carboxyltransferase N-terminal domain; that stretch reads LWEKCSNCGS…QPHPQDADAA (268 aa). Cysteine 32, cysteine 35, cysteine 51, and cysteine 54 together coordinate Zn(2+). The segment at 32–54 adopts a C4-type zinc-finger fold; it reads CSNCGSALYGPELEENLEVCPKC.

The protein belongs to the AccD/PCCB family. Acetyl-CoA carboxylase is a heterohexamer composed of biotin carboxyl carrier protein (AccB), biotin carboxylase (AccC) and two subunits each of ACCase subunit alpha (AccA) and ACCase subunit beta (AccD). Requires Zn(2+) as cofactor.

It localises to the cytoplasm. The catalysed reaction is N(6)-carboxybiotinyl-L-lysyl-[protein] + acetyl-CoA = N(6)-biotinyl-L-lysyl-[protein] + malonyl-CoA. It participates in lipid metabolism; malonyl-CoA biosynthesis; malonyl-CoA from acetyl-CoA: step 1/1. Its function is as follows. Component of the acetyl coenzyme A carboxylase (ACC) complex. Biotin carboxylase (BC) catalyzes the carboxylation of biotin on its carrier protein (BCCP) and then the CO(2) group is transferred by the transcarboxylase to acetyl-CoA to form malonyl-CoA. This is Acetyl-coenzyme A carboxylase carboxyl transferase subunit beta from Xanthomonas campestris pv. campestris (strain 8004).